A 695-amino-acid chain; its full sequence is MATFILEIGTEELPARFLLELQSELGVRFLDSLQSMGYRPTEVSDYSTPRRLVVCIKGLDMIQPHCEEVVIGPPINIAFDKDGNPTKAAEGFAKNLGITIGSLSQISTDRGEYISGLKVKGGIPTKEVLARLCPEIITALPLPKRMRWGNNPFTFIRPIRWIMALLDSDIVPFELAGIHSNRNTVGLRNNNVPFIEVPSSTDYYMLLKEVGNVILDPNSRKDSILQLGNKEAQLIGGVVNWNERLLNEVIGLVEHPYPLLGTINSVFLNLPREVLLTSIETHQKSFGILDSQGNLLPYFLTVLNMTPPDLALVKQGWERVLQARLEDARFFWNEDINSSFDEWQEKLTHLIFLDPLGSIAQKEHRVSLLCEWIAKYIPTSNAEEARKAGSLSKVDLVSKMVEEFPELQGVMGGIYARHKGESESIATAIAEQYLPSGPDTDVPVTDLGAILSIADKIDTLVGCFGCGIIPTGTADPYGLRRCALGIIRILIEKEYPINLHQLYTRAQDNFVNVSWKLAPEDVLQKLHEFIIARLKNYFLALGYDTLVVEAIVSTQTSQLWSIKDRLDSFILLSQHEDFSQLVQTIKRVINIIKKQDKETEIVLTGHWNPSLFKDTAEKVLAEKLMIAVNKFNQESQTASLPVFMMLLKLQPAINTFFDQVMIMSNDIEVRRNRLNLLKALLLYIESLADFSVLQI.

This sequence belongs to the class-II aminoacyl-tRNA synthetase family. In terms of assembly, tetramer of two alpha and two beta subunits.

It is found in the cytoplasm. It catalyses the reaction tRNA(Gly) + glycine + ATP = glycyl-tRNA(Gly) + AMP + diphosphate. This Lawsonia intracellularis (strain PHE/MN1-00) protein is Glycine--tRNA ligase beta subunit.